Here is a 1064-residue protein sequence, read N- to C-terminus: Lysine-specific demethylase 4A (1064 aa).

At A2 the chain carries N-acetylalanine. Residues 14–56 (IMTFYPTMEEFRNFSRYIAYIESQGAHRAGLAKVVPPKEWKPR) enclose the JmjN domain. Y132 is a binding site for 2-oxoglutarate. In terms of domain architecture, JmjC spans 142–308 (EQHVDEWNIG…YGKQAVLCSC (167 aa)). 2 residues coordinate Fe cation: H188 and E190. Residues N198 and K206 each coordinate 2-oxoglutarate. Residues C234 and H240 each coordinate Zn(2+). K241 serves as a coordination point for 2-oxoglutarate. H276 is a Fe cation binding site. Zn(2+) is bound by residues C306 and C308. 5 disordered regions span residues 354–384 (LKDS…EEGD), 434–489 (LAPV…LDLS), 502–537 (SGSK…QGQE), 549–573 (RGDG…SISE), and 590–643 (NKKT…LSQL). A compositionally biased stretch (acidic residues) spans 368-382 (ECPEEDVEAADQGEE). Residues 460 to 472 (TEVKFEELKNVKL) are compositionally biased toward basic and acidic residues. Acidic residues predominate over residues 473–482 (EEEDEEDEPE). A compositionally biased stretch (low complexity) spans 509–525 (SSSLGSTSSQDSVSSDS). A Phosphoserine modification is found at S523. The segment covering 528 to 537 (AESVSCQGQE) has biased composition (polar residues). Residues 593–608 (TKGRRQPLSKLPRHHP) are compositionally biased toward basic residues. Residues 597 to 638 (RQPLSKLPRHHPLVLQECGSDDETSEQLTPEEEAEETEAWAK) are interaction with NCOR1. Acidic residues predominate over residues 615 to 634 (GSDDETSEQLTPEEEAEETE). The PHD-type 1 zinc-finger motif lies at 709–767 (MCFTTTGCSTDINLSTPYLEEDGTSMLVSCKKCSVRVHASCYGVPPAKASEEWMCSRCS). Residues 772–805 (EEDCCLCSLRGGALQRANDDRWVHVSCAVAILEA) form a C2HC pre-PHD-type zinc finger. The segment at 828-885 (LKCVFCKKRRKRNAGCCVQCSHGRCPTAFHVSCAQAAGVMMQPDDWPFVVFITCFRHK) adopts a PHD-type 2 zinc-finger fold. 2 Tudor domains span residues 897-954 (LSIT…CLQL) and 955-1011 (GPPA…EELP).

The protein belongs to the JHDM3 histone demethylase family. In terms of assembly, interacts with histone deacetylase proteins HDAC1, HDAC2 and HDAC3. Interacts with RB and NCOR1. Interacts with VRK1. It depends on Fe(2+) as a cofactor. In terms of processing, ubiquitinated by RNF8 and RNF168, leading to its degradation. Degradation promotes accessibility of H4K20me2 mark for DNA repair protein TP53BP1, which is then recruited. Also ubiquitinated by the SCF(FBXO22) complex; leading to proteasomal degradation. In terms of tissue distribution, widely expressed.

The protein resides in the nucleus. The catalysed reaction is N(6),N(6),N(6)-trimethyl-L-lysyl(9)-[histone H3] + 2 2-oxoglutarate + 2 O2 = N(6)-methyl-L-lysyl(9)-[histone H3] + 2 formaldehyde + 2 succinate + 2 CO2. The enzyme catalyses N(6),N(6),N(6)-trimethyl-L-lysyl(36)-[histone H3] + 2 2-oxoglutarate + 2 O2 = N(6)-methyl-L-lysyl(36)-[histone H3] + 2 formaldehyde + 2 succinate + 2 CO2. Functionally, histone demethylase that specifically demethylates 'Lys-9' and 'Lys-36' residues of histone H3, thereby playing a central role in histone code. Does not demethylate histone H3 'Lys-4', H3 'Lys-27' nor H4 'Lys-20'. Demethylates trimethylated H3 'Lys-9' and H3 'Lys-36' residue, while it has no activity on mono- and dimethylated residues. Demethylation of Lys residue generates formaldehyde and succinate. Participates in transcriptional repression of ASCL2 and E2F-responsive promoters via the recruitment of histone deacetylases and NCOR1, respectively. In Mus musculus (Mouse), this protein is Lysine-specific demethylase 4A (Kdm4a).